Here is a 220-residue protein sequence, read N- to C-terminus: Aspartic protease inhibitor 2 (220 aa).

A signal peptide spans 1–23 (MMKCLFLLCLCLLPIVVFSSTFT). Positions 24 to 32 (SQNLIDLPS) are excised as a propeptide. Positions 26-31 (NLIDLP) match the Vacuolar targeting signal motif. A glycan (N-linked (GlcNAc...) asparagine) is linked at N51. Intrachain disulfides connect C80/C125 and C174/C185.

Belongs to the protease inhibitor I3 (leguminous Kunitz-type inhibitor) family. Tubers.

It localises to the vacuole. Functionally, inhibitor of cathepsin D (aspartic protease). May also inhibit trypsin and chymotrypsin (serine proteases). Protects the plant by inhibiting proteases of invading organisms. The chain is Aspartic protease inhibitor 2 from Solanum tuberosum (Potato).